The sequence spans 152 residues: Transcriptional repressor NrdR (152 aa).

Residues 3 to 34 fold into a zinc finger; the sequence is CPYCNASETKVIDSRLAAEGAQVRRRRSCNSC. The 91-residue stretch at 49–139 folds into the ATP-cone domain; the sequence is PRIIKSSGKI…VYRDFQDIDA (91 aa).

This sequence belongs to the NrdR family. Zn(2+) is required as a cofactor.

Its function is as follows. Negatively regulates transcription of bacterial ribonucleotide reductase nrd genes and operons by binding to NrdR-boxes. The chain is Transcriptional repressor NrdR from Psychrobacter cryohalolentis (strain ATCC BAA-1226 / DSM 17306 / VKM B-2378 / K5).